We begin with the raw amino-acid sequence, 2924 residues long: Zinc finger ZZ-type and EF-hand domain-containing protein 1 (2924 aa).

Positions 1-41 are disordered; it reads MGNAPSNSSEDEAAAAGGEGWSPHQDWAADSGTTPGPGPAA. Gly-2 carries the N-myristoyl glycine lipid modification. The span at 28 to 41 shows a compositional bias: low complexity; the sequence is AADSGTTPGPGPAA. Positions 111–146 constitute an EF-hand domain; it reads CSGEQFEEAFAQFDAEGDGTVDAENMLEALKNSSGA. The DOC domain occupies 226–405; sequence LVQKEKESPG…AIWYWSLLTS (180 aa). At Ser-240 the chain carries Phosphoserine. Basic and acidic residues predominate over residues 1452–1470; sequence HLQPLDRRQRTSSVVEEHF. A disordered region spans residues 1452 to 1527; that stretch reads HLQPLDRRQR…STPTRRPPFT (76 aa). The span at 1472-1485 shows a compositional bias: low complexity; it reads GSASPTEAATPAAG. A phosphoserine mark is found at Ser-1475, Ser-1488, and Ser-1509. Thr-1510 carries the phosphothreonine modification. The segment covering 1514–1523 has biased composition (pro residues); it reads PSPPSTPTRR. Ser-1515 bears the Phosphoserine mark. Phosphothreonine is present on residues Thr-1519 and Thr-1521. Phosphoserine is present on residues Ser-1535 and Ser-1538. 2 ZZ-type zinc fingers span residues 1776–1831 and 1825–1880; these read NVDI…FTCD and NMEF…MVTI. 16 residues coordinate Zn(2+): Cys-1781, Cys-1784, Cys-1795, Cys-1798, Cys-1804, Cys-1807, His-1817, His-1821, Cys-1830, Cys-1833, Cys-1844, Cys-1847, Cys-1853, Cys-1856, His-1866, and His-1870. A disordered region spans residues 2388–2418; the sequence is DLELDERGDQEEELDRPVSSPGEAEQKKLDP. Ser-2407 is subject to Phosphoserine. Residue Lys-2630 is modified to N6-acetyllysine.

In terms of assembly, interacts with KLF6 and KLF9. Interacts via (ZZ-type 2 zinc finger) with histone H3 trimethylated at 'Lys-4' (H3K4me3) and histone H3 acetylated at 'Lys-4' (H3K4ac).

Functionally, histone H3 reader which may act as a transcriptional coactivator for KLF6 and KLF9 transcription factors. The polypeptide is Zinc finger ZZ-type and EF-hand domain-containing protein 1 (Zzef1) (Mus musculus (Mouse)).